The primary structure comprises 282 residues: 2-dehydro-3-deoxyphosphooctonate aldolase (282 aa).

The protein belongs to the KdsA family.

It localises to the cytoplasm. The catalysed reaction is D-arabinose 5-phosphate + phosphoenolpyruvate + H2O = 3-deoxy-alpha-D-manno-2-octulosonate-8-phosphate + phosphate. It participates in carbohydrate biosynthesis; 3-deoxy-D-manno-octulosonate biosynthesis; 3-deoxy-D-manno-octulosonate from D-ribulose 5-phosphate: step 2/3. It functions in the pathway bacterial outer membrane biogenesis; lipopolysaccharide biosynthesis. This Agrobacterium fabrum (strain C58 / ATCC 33970) (Agrobacterium tumefaciens (strain C58)) protein is 2-dehydro-3-deoxyphosphooctonate aldolase.